Reading from the N-terminus, the 180-residue chain is SPbeta prophage-derived uncharacterized protein YosC (180 aa).

The chain is SPbeta prophage-derived uncharacterized protein YosC (yosC) from Bacillus subtilis (strain 168).